A 538-amino-acid chain; its full sequence is Endoglucanase 16 (538 aa).

The first 26 residues, 1 to 26, serve as a signal peptide directing secretion; that stretch reads MRWRRVGDVVAVALLLGAAAAAAAAA. The active-site Nucleophile is the D83. Residues H431, D483, and E492 contribute to the active site. The disordered stretch occupies residues 513-538; the sequence is RQESPSTTTTTTATTSSPEMGLSVNR. The segment covering 516–530 has biased composition (low complexity); the sequence is SPSTTTTTTATTSSP.

The protein belongs to the glycosyl hydrolase 9 (cellulase E) family.

The protein localises to the secreted. The catalysed reaction is Endohydrolysis of (1-&gt;4)-beta-D-glucosidic linkages in cellulose, lichenin and cereal beta-D-glucans.. The sequence is that of Endoglucanase 16 from Oryza sativa subsp. japonica (Rice).